We begin with the raw amino-acid sequence, 150 residues long: Myosin, essential light chain (150 aa).

EF-hand domains follow at residues 3 to 38 and 75 to 110; these read ASAD…LGKS and EQQK…LGDY. The Ca(2+) site is built by Asp-16, Asp-18, Asp-20, Lys-22, and Asp-27.

In terms of assembly, myosin is a hexamer of 2 heavy chains and 4 light chains (two regulatory light chains and two essential light chains).

This is Myosin, essential light chain (mlcE) from Dictyostelium discoideum (Social amoeba).